The sequence spans 975 residues: GPI inositol-deacylase (975 aa).

A helical membrane pass occupies residues 27–47 (STLVIIVGLLLLCIITSTHIS). Residue asparagine 49 is glycosylated (N-linked (GlcNAc...) asparagine). Residue serine 210 is part of the active site. N-linked (GlcNAc...) asparagine glycosylation is found at asparagine 276, asparagine 384, asparagine 407, asparagine 419, and asparagine 488. A helical membrane pass occupies residues 655 to 675 (LAFASIPISIIALVLCYQFYY). Asparagine 696 is a glycosylation site (N-linked (GlcNAc...) asparagine). 3 helical membrane-spanning segments follow: residues 699–719 (LLIF…AILT), 751–771 (FVWW…FIIL), and 818–838 (VCFI…FILV). Asparagine 867 carries an N-linked (GlcNAc...) asparagine glycan. The next 3 helical transmembrane spans lie at 868–888 (VSFL…VVVF), 932–952 (NWLI…MYGI), and 955–975 (LYWV…LTIL).

It belongs to the GPI inositol-deacylase family.

Its subcellular location is the endoplasmic reticulum membrane. Its function is as follows. Involved in inositol deacylation of GPI-anchored proteins which plays important roles in the quality control and ER-associated degradation of GPI-anchored proteins. The chain is GPI inositol-deacylase (BST1) from Kluyveromyces lactis (strain ATCC 8585 / CBS 2359 / DSM 70799 / NBRC 1267 / NRRL Y-1140 / WM37) (Yeast).